The chain runs to 874 residues: ATP-dependent RNA helicase DDX54 (874 aa).

Residues Met-1–Val-76 form a disordered region. The segment covering Trp-20–Thr-30 has biased composition (basic residues). Thr-30 bears the Phosphothreonine mark. Phosphoserine occurs at positions 33, 38, 40, and 74. Over residues Asp-39–Glu-50 the composition is skewed to acidic residues. The Q motif motif lies at Gly-95–Arg-123. Residues Ile-126–Ile-298 enclose the Helicase ATP-binding domain. Ala-139 to Thr-146 is a binding site for ATP. Residues Asp-246 to Asp-249 carry the DEAD box motif. The 145-residue stretch at Tyr-328–Ala-472 folds into the Helicase C-terminal domain. Residues Ala-581–Met-590 show a composition bias toward polar residues. The tract at residues Ala-581–Leu-687 is disordered. The span at Thr-636–Val-645 shows a compositional bias: low complexity. Residues Glu-664–Arg-685 show a composition bias toward basic and acidic residues. A phosphoserine mark is found at Ser-688 and Ser-690. A disordered region spans residues Ala-712–Met-874. Polar residues predominate over residues Gln-713–Leu-722. Composition is skewed to basic and acidic residues over residues Gln-737–Ser-747 and Tyr-755–Asp-771. Ser-774 and Ser-780 each carry phosphoserine. Residues Met-812 to Leu-823 are compositionally biased toward basic and acidic residues. Basic residues predominate over residues Pro-864 to Met-874.

The protein belongs to the DEAD box helicase family. DDX54/DBP10 subfamily. As to quaternary structure, interacts in a hormone-dependent manner with nuclear receptors.

The protein resides in the nucleus. It localises to the nucleolus. It catalyses the reaction ATP + H2O = ADP + phosphate + H(+). Functionally, has RNA-dependent ATPase activity. Represses the transcriptional activity of nuclear receptors. This Mus musculus (Mouse) protein is ATP-dependent RNA helicase DDX54 (Ddx54).